Consider the following 275-residue polypeptide: Large ribosomal subunit protein uL2c (275 aa).

Residues 225–252 (MNPCDHPHGGGEGRSPIGRAKPVTPWGK) are disordered.

The protein belongs to the universal ribosomal protein uL2 family. Part of the 50S ribosomal subunit.

Its subcellular location is the plastid. It is found in the chloroplast. The polypeptide is Large ribosomal subunit protein uL2c (rpl2) (Guillardia theta (Cryptophyte)).